The following is a 276-amino-acid chain: Undecaprenyl-diphosphatase (276 aa).

The next 8 helical transmembrane spans lie at 1–21 (MSWLQVIVLAVVQGLTEFLPV), 39–59 (AGASFTAVTQLGTEVAVLVYF), 84–104 (YRLGWYVIIGTIPIGVIGLLL), 115–135 (LWAIAIALIVFSAVIAAAEYF), 159–179 (LALLPGVSRSGATISAGLFLG), 190–210 (FLLAIPAVFASGLFSLPDAFA), 222–242 (QLLVATVIAFVVGFAAVAWFL), and 253–273 (FVGYRVVLGVVVLILLSTGVV).

Belongs to the UppP family.

The protein localises to the cell membrane. It carries out the reaction di-trans,octa-cis-undecaprenyl diphosphate + H2O = di-trans,octa-cis-undecaprenyl phosphate + phosphate + H(+). In terms of biological role, catalyzes the dephosphorylation of undecaprenyl diphosphate (UPP). Confers resistance to bacitracin. The sequence is that of Undecaprenyl-diphosphatase from Mycobacterium sp. (strain KMS).